The primary structure comprises 1428 residues: Gag-Pol polyprotein (1428 aa).

The N-myristoyl glycine; by host moiety is linked to residue G2. An interaction with Gp41 region spans residues 7–31 (VLSGKKLDSWEKIRLRPGGNKKYRL). The tract at residues 8 to 43 (LSGKKLDSWEKIRLRPGGNKKYRLKHLVWASRELEK) is interaction with host CALM1. The tract at residues 12–19 (KLDSWEKI) is interaction with host AP3D1. An interaction with membrane phosphatidylinositol 4,5-bisphosphate and RNA region spans residues 14–33 (DSWEKIRLRPGGNKKYRLKH). The Nuclear export signal motif lies at 16–22 (WEKIRLR). Positions 26–32 (NKKYRLK) match the Nuclear localization signal motif. The segment at 73 to 77 (EELRS) is interaction with membrane phosphatidylinositol 4,5-bisphosphate. A disordered region spans residues 108–130 (QNKNKQRTQQAAANTGSSQNYPI). The segment covering 114-130 (RTQQAAANTGSSQNYPI) has biased composition (polar residues). A Phosphotyrosine; by host modification is found at Y128. Residues 185-223 (NVVGGHQAAMQMLKDTINEEAAEWDRLHPVHAGPIPPGQ) are interaction with human PPIA/CYPA and NUP153. The interval 273-359 (YSPVSILDIR…GGPGHKARVL (87 aa)) is dimerization/Multimerization of capsid protein p24. 2 consecutive CCHC-type zinc fingers follow at residues 384–401 (IKCF…NCRA) and 405–422 (KGCW…DCTE). Residues 438 to 475 (EAREFSSEQTRANSPTSRNLWDGGKDDLPCETGAERQG) are disordered. Residues 444 to 456 (SEQTRANSPTSRN) are compositionally biased toward polar residues. The segment covering 460–475 (GGKDDLPCETGAERQG) has biased composition (basic and acidic residues). The segment at 482–486 (PQITL) is dimerization of protease. In terms of domain architecture, Peptidase A2 spans 501 to 570 (IEALLDTGAD…TPVNIIGRNM (70 aa)). D506 functions as the For protease activity; shared with dimeric partner in the catalytic mechanism. Dimerization of protease stretches follow at residues 530–536 (GIGGFIK) and 569–581 (NMLT…LNFP). Positions 624 to 814 (EGKISKIGPE…PPFLWMGYEL (191 aa)) constitute a Reverse transcriptase domain. Mg(2+) contacts are provided by D690, D765, and D766. Residues 807 to 815 (FLWMGYELH) form an RT 'primer grip' region. The Tryptophan repeat motif motif lies at 978-994 (WEAWWMEYWQATWIPEW). One can recognise an RNase H type-1 domain in the interval 1014 to 1137 (IAGAETFYVD…VDKLVSSGIR (124 aa)). Residues D1023, E1058, D1078, and D1129 each contribute to the Mg(2+) site. The segment at 1143-1184 (DGIDKAQEDHEKYHCNWRAMASDFNLPPVVAKEIVASCNKCQ) adopts an Integrase-type zinc-finger fold. Zn(2+)-binding residues include H1152, H1156, C1180, and C1183. The Integrase catalytic domain occupies 1194–1344 (VDCSPGIWQL…SAGERIIDII (151 aa)). Residues D1204, D1256, and E1292 each coordinate Mg(2+). The segment at residues 1363–1410 (FRVYYRDSRDPIWKGPAKLLWKGEGAVVIQDNSDIKVVPRRKAKIIRD) is a DNA-binding region (integrase-type).

As to quaternary structure, homotrimer; further assembles as hexamers of trimers. Interacts with gp41 (via C-terminus). Interacts with host CALM1; this interaction induces a conformational change in the Matrix protein, triggering exposure of the myristate group. Interacts with host AP3D1; this interaction allows the polyprotein trafficking to multivesicular bodies during virus assembly. Part of the pre-integration complex (PIC) which is composed of viral genome, matrix protein, Vpr and integrase. Homodimer; the homodimer further multimerizes as homohexamers or homopentamers. Interacts with human PPIA/CYPA; This interaction stabilizes the capsid. Interacts with human NUP153. Interacts with host PDZD8; this interaction stabilizes the capsid. Interacts with monkey TRIM5; this interaction destabilizes the capsid. In terms of assembly, homodimer, whose active site consists of two apposed aspartic acid residues. As to quaternary structure, heterodimer of p66 RT and p51 RT (RT p66/p51). Heterodimerization of RT is essential for DNA polymerase activity. The overall folding of the subdomains is similar in p66 RT and p51 RT but the spatial arrangements of the subdomains are dramatically different. Homotetramer; may further associate as a homohexadecamer. Part of the pre-integration complex (PIC) which is composed of viral genome, matrix protein, Vpr and integrase. Interacts with human SMARCB1/INI1 and human PSIP1/LEDGF isoform 1. Interacts with human KPNA3; this interaction might play a role in nuclear import of the pre-integration complex. Interacts with human NUP153; this interaction might play a role in nuclear import of the pre-integration complex. Mg(2+) serves as cofactor. Specific enzymatic cleavages by the viral protease yield mature proteins. The protease is released by autocatalytic cleavage. The polyprotein is cleaved during and after budding, this process is termed maturation. Proteolytic cleavage of p66 RT removes the RNase H domain to yield the p51 RT subunit. Nucleocapsid protein p7 might be further cleaved after virus entry. Post-translationally, tyrosine phosphorylated presumably in the virion by a host kinase. Phosphorylation is apparently not a major regulator of membrane association. In terms of processing, phosphorylated possibly by host MAPK1; this phosphorylation is necessary for Pin1-mediated virion uncoating. Methylated by host PRMT6, impairing its function by reducing RNA annealing and the initiation of reverse transcription.

The protein resides in the host cell membrane. Its subcellular location is the host endosome. The protein localises to the host multivesicular body. It localises to the virion membrane. It is found in the host nucleus. The protein resides in the host cytoplasm. Its subcellular location is the virion. It carries out the reaction Specific for a P1 residue that is hydrophobic, and P1' variable, but often Pro.. The catalysed reaction is Endohydrolysis of RNA in RNA/DNA hybrids. Three different cleavage modes: 1. sequence-specific internal cleavage of RNA. Human immunodeficiency virus type 1 and Moloney murine leukemia virus enzymes prefer to cleave the RNA strand one nucleotide away from the RNA-DNA junction. 2. RNA 5'-end directed cleavage 13-19 nucleotides from the RNA end. 3. DNA 3'-end directed cleavage 15-20 nucleotides away from the primer terminus.. The enzyme catalyses 3'-end directed exonucleolytic cleavage of viral RNA-DNA hybrid.. It catalyses the reaction DNA(n) + a 2'-deoxyribonucleoside 5'-triphosphate = DNA(n+1) + diphosphate. Its activity is regulated as follows. Protease: The viral protease is inhibited by many synthetic protease inhibitors (PIs), such as amprenavir, atazanavir, indinavir, loprinavir, nelfinavir, ritonavir and saquinavir. Use of protease inhibitors in tritherapy regimens permit more ambitious therapeutic strategies. Reverse transcriptase/ribonuclease H: RT can be inhibited either by nucleoside RT inhibitors (NRTIs) or by non nucleoside RT inhibitors (NNRTIs). NRTIs act as chain terminators, whereas NNRTIs inhibit DNA polymerization by binding a small hydrophobic pocket near the RT active site and inducing an allosteric change in this region. Classical NRTIs are abacavir, adefovir (PMEA), didanosine (ddI), lamivudine (3TC), stavudine (d4T), tenofovir (PMPA), zalcitabine (ddC), and zidovudine (AZT). Classical NNRTIs are atevirdine (BHAP U-87201E), delavirdine, efavirenz (DMP-266), emivirine (I-EBU), and nevirapine (BI-RG-587). The tritherapies used as a basic effective treatment of AIDS associate two NRTIs and one NNRTI. Mediates, with Gag polyprotein, the essential events in virion assembly, including binding the plasma membrane, making the protein-protein interactions necessary to create spherical particles, recruiting the viral Env proteins, and packaging the genomic RNA via direct interactions with the RNA packaging sequence (Psi). Gag-Pol polyprotein may regulate its own translation, by the binding genomic RNA in the 5'-UTR. At low concentration, the polyprotein would promote translation, whereas at high concentration, the polyprotein would encapsidate genomic RNA and then shut off translation. Functionally, targets the polyprotein to the plasma membrane via a multipartite membrane-binding signal, that includes its myristoylated N-terminus. Matrix protein is part of the pre-integration complex. Implicated in the release from host cell mediated by Vpu. Binds to RNA. Its function is as follows. Forms the conical core that encapsulates the genomic RNA-nucleocapsid complex in the virion. Most core are conical, with only 7% tubular. The core is constituted by capsid protein hexamer subunits. The core is disassembled soon after virion entry. Host restriction factors such as TRIM5-alpha or TRIMCyp bind retroviral capsids and cause premature capsid disassembly, leading to blocks in reverse transcription. Capsid restriction by TRIM5 is one of the factors which restricts HIV-1 to the human species. Host PIN1 apparently facilitates the virion uncoating. On the other hand, interactions with PDZD8 or CYPA stabilize the capsid. In terms of biological role, encapsulates and protects viral dimeric unspliced genomic RNA (gRNA). Binds these RNAs through its zinc fingers. Acts as a nucleic acid chaperone which is involved in rearangement of nucleic acid secondary structure during gRNA retrotranscription. Also facilitates template switch leading to recombination. As part of the polyprotein, participates in gRNA dimerization, packaging, tRNA incorporation and virion assembly. Aspartyl protease that mediates proteolytic cleavages of Gag and Gag-Pol polyproteins during or shortly after the release of the virion from the plasma membrane. Cleavages take place as an ordered, step-wise cascade to yield mature proteins. This process is called maturation. Displays maximal activity during the budding process just prior to particle release from the cell. Also cleaves Nef and Vif, probably concomitantly with viral structural proteins on maturation of virus particles. Hydrolyzes host EIF4GI and PABP1 in order to shut off the capped cellular mRNA translation. The resulting inhibition of cellular protein synthesis serves to ensure maximal viral gene expression and to evade host immune response. Also mediates cleavage of host YTHDF3. Mediates cleavage of host CARD8, thereby activating the CARD8 inflammasome, leading to the clearance of latent HIV-1 in patient CD4(+) T-cells after viral reactivation; in contrast, HIV-1 can evade CARD8-sensing when its protease remains inactive in infected cells prior to viral budding. Functionally, multifunctional enzyme that converts the viral RNA genome into dsDNA in the cytoplasm, shortly after virus entry into the cell. This enzyme displays a DNA polymerase activity that can copy either DNA or RNA templates, and a ribonuclease H (RNase H) activity that cleaves the RNA strand of RNA-DNA heteroduplexes in a partially processive 3' to 5' endonucleasic mode. Conversion of viral genomic RNA into dsDNA requires many steps. A tRNA(3)-Lys binds to the primer-binding site (PBS) situated at the 5'-end of the viral RNA. RT uses the 3' end of the tRNA primer to perform a short round of RNA-dependent minus-strand DNA synthesis. The reading proceeds through the U5 region and ends after the repeated (R) region which is present at both ends of viral RNA. The portion of the RNA-DNA heteroduplex is digested by the RNase H, resulting in a ssDNA product attached to the tRNA primer. This ssDNA/tRNA hybridizes with the identical R region situated at the 3' end of viral RNA. This template exchange, known as minus-strand DNA strong stop transfer, can be either intra- or intermolecular. RT uses the 3' end of this newly synthesized short ssDNA to perform the RNA-dependent minus-strand DNA synthesis of the whole template. RNase H digests the RNA template except for two polypurine tracts (PPTs) situated at the 5'-end and near the center of the genome. It is not clear if both polymerase and RNase H activities are simultaneous. RNase H probably can proceed both in a polymerase-dependent (RNA cut into small fragments by the same RT performing DNA synthesis) and a polymerase-independent mode (cleavage of remaining RNA fragments by free RTs). Secondly, RT performs DNA-directed plus-strand DNA synthesis using the PPTs that have not been removed by RNase H as primers. PPTs and tRNA primers are then removed by RNase H. The 3' and 5' ssDNA PBS regions hybridize to form a circular dsDNA intermediate. Strand displacement synthesis by RT to the PBS and PPT ends produces a blunt ended, linear dsDNA copy of the viral genome that includes long terminal repeats (LTRs) at both ends. Its function is as follows. Catalyzes viral DNA integration into the host chromosome, by performing a series of DNA cutting and joining reactions. This enzyme activity takes place after virion entry into a cell and reverse transcription of the RNA genome in dsDNA. The first step in the integration process is 3' processing. This step requires a complex comprising the viral genome, matrix protein, Vpr and integrase. This complex is called the pre-integration complex (PIC). The integrase protein removes 2 nucleotides from each 3' end of the viral DNA, leaving recessed CA OH's at the 3' ends. In the second step, the PIC enters cell nucleus. This process is mediated through integrase and Vpr proteins, and allows the virus to infect a non dividing cell. This ability to enter the nucleus is specific of lentiviruses, other retroviruses cannot and rely on cell division to access cell chromosomes. In the third step, termed strand transfer, the integrase protein joins the previously processed 3' ends to the 5' ends of strands of target cellular DNA at the site of integration. The 5'-ends are produced by integrase-catalyzed staggered cuts, 5 bp apart. A Y-shaped, gapped, recombination intermediate results, with the 5'-ends of the viral DNA strands and the 3' ends of target DNA strands remaining unjoined, flanking a gap of 5 bp. The last step is viral DNA integration into host chromosome. This involves host DNA repair synthesis in which the 5 bp gaps between the unjoined strands are filled in and then ligated. Since this process occurs at both cuts flanking the HIV genome, a 5 bp duplication of host DNA is produced at the ends of HIV-1 integration. Alternatively, Integrase may catalyze the excision of viral DNA just after strand transfer, this is termed disintegration. The protein is Gag-Pol polyprotein (gag-pol) of Human immunodeficiency virus type 1 group M subtype A (isolate U455) (HIV-1).